A 140-amino-acid polypeptide reads, in one-letter code: Nucleoside diphosphate kinase (140 aa).

Residues Lys-11, Phe-59, Arg-87, Thr-93, Arg-104, and Asn-114 each contribute to the ATP site. The Pros-phosphohistidine intermediate role is filled by His-117.

Belongs to the NDK family. Homotetramer. Mg(2+) serves as cofactor.

It localises to the cytoplasm. The enzyme catalyses a 2'-deoxyribonucleoside 5'-diphosphate + ATP = a 2'-deoxyribonucleoside 5'-triphosphate + ADP. It catalyses the reaction a ribonucleoside 5'-diphosphate + ATP = a ribonucleoside 5'-triphosphate + ADP. Its function is as follows. Major role in the synthesis of nucleoside triphosphates other than ATP. The ATP gamma phosphate is transferred to the NDP beta phosphate via a ping-pong mechanism, using a phosphorylated active-site intermediate. This Rickettsia akari (strain Hartford) protein is Nucleoside diphosphate kinase.